Consider the following 284-residue polypeptide: Tropomyosin (284 aa).

Positions 1–284 (MDAIKKKMLM…DQALNELHNM (284 aa)) form a coiled coil. 2 disordered regions span residues 106 to 134 (LNST…ENRQ) and 186 to 221 (AETK…EEAY). Basic and acidic residues-rich tracts occupy residues 112–134 (KLTD…ENRQ) and 186–198 (AETK…DELK).

It belongs to the tropomyosin family. Homodimer.

Tropomyosin, in association with the troponin complex, plays a central role in the calcium dependent regulation of muscle contraction. The protein is Tropomyosin (TPM) of Branchiostoma belcheri (Amphioxus).